The sequence spans 350 residues: Outer membrane protein A (350 aa).

Positions 1-21 (MKKTAIAIAVALAGFATVAQA) are cleaved as a signal peptide. 8 beta stranded membrane-spanning segments follow: residues 27-37 (TWYAGAKLGWS), 55-66 (QLGAGAFGGYQV), 70-78 (VGFEMGYDW), 96-107 (QGVQLTAKLGYP), 112-120 (LDVYTRLGG), 146-155 (PVFAGGIEYA), 160-167 (IATRLEYQ), and 186-194 (LLSVGVSYR). 4 tandem repeats follow at residues 205–206 (AP), 207–208 (AP), 209–210 (AP), and 211–212 (AP). The 4 X 2 AA tandem repeats of A-P stretch occupies residues 205 to 212 (APAPAPAP). The 129-residue stretch at 214-342 (VQTKHFTLKS…RVEIEVKGVK (129 aa)) folds into the OmpA-like domain. A disulfide bridge connects residues C315 and C327.

The protein belongs to the outer membrane OOP (TC 1.B.6) superfamily. OmpA family. As to quaternary structure, monomer and homodimer.

It is found in the cell outer membrane. In terms of biological role, with TolR probably plays a role in maintaining the position of the peptidoglycan cell wall in the periplasm. Acts as a porin with low permeability that allows slow penetration of small solutes; an internal gate slows down solute passage. Required for conjugation with F-type plasmids; probably serves as the mating receptor on recipient cells. This is Outer membrane protein A from Salmonella typhi.